A 307-amino-acid chain; its full sequence is Aspartate carbamoyltransferase catalytic subunit (307 aa).

The carbamoyl phosphate site is built by R56 and T57. K84 contributes to the L-aspartate binding site. 3 residues coordinate carbamoyl phosphate: R106, H136, and Q139. The L-aspartate site is built by R169 and R221. Residues A262 and P263 each coordinate carbamoyl phosphate.

Belongs to the aspartate/ornithine carbamoyltransferase superfamily. ATCase family. In terms of assembly, heterododecamer (2C3:3R2) of six catalytic PyrB chains organized as two trimers (C3), and six regulatory PyrI chains organized as three dimers (R2).

It carries out the reaction carbamoyl phosphate + L-aspartate = N-carbamoyl-L-aspartate + phosphate + H(+). It functions in the pathway pyrimidine metabolism; UMP biosynthesis via de novo pathway; (S)-dihydroorotate from bicarbonate: step 2/3. Its function is as follows. Catalyzes the condensation of carbamoyl phosphate and aspartate to form carbamoyl aspartate and inorganic phosphate, the committed step in the de novo pyrimidine nucleotide biosynthesis pathway. This chain is Aspartate carbamoyltransferase catalytic subunit, found in Streptococcus pneumoniae serotype 2 (strain D39 / NCTC 7466).